Consider the following 687-residue polypeptide: Protein-glutamine gamma-glutamyltransferase 2 (687 aa).

Alanine 2 is modified (N-acetylalanine). Serine 60 carries the phosphoserine modification. 2 disulfide bridges follow: cysteine 230/cysteine 370 and cysteine 370/cysteine 371. Residues cysteine 277, histidine 335, and aspartate 358 contribute to the active site. Ca(2+)-binding residues include asparagine 398, aspartate 400, glutamate 437, glutamate 447, and glutamate 452. Residue lysine 468 is modified to N6-acetyllysine. 476–483 (RIRVGQSM) contributes to the GTP binding site. Glutamate 539 serves as a coordination point for Ca(2+). A GTP-binding site is contributed by 580–583 (RDLY). Glutamine 633 participates in a covalent cross-link: Isoglutamyl lysine isopeptide (Gln-Lys) (interchain with K-?).

Belongs to the transglutaminase superfamily. Transglutaminase family. As to quaternary structure, monomer. Interacts with phospholipase C; promoting alpha-1 adrenergic receptor signaling. Interacts with PLCD1. In terms of assembly, homooligomer. Requires Ca(2+) as cofactor. Post-translationally, disulfide bond formation inactivates the calcium-dependent acyltransferase activity. Cys-370 can form disulfide bonds with both Cys-230 and Cys-371: formation of a disulfide bond between Cys-230 and Cys-370 facilitates formation of the disulfide between Cys-370 and Cys-371, which promotes inactivation of the acyltransferase activity. May also form interchain disulfids between Cys-230 and Cys-370. Ca(2+) protects against disulfide bond formation and inactivation. Auto-transglutaminated: Forms covalent cross-links mediated by transglutaminase between Gln-633 and the epsilon-amino group of a lysine residue of itself or HMGB1, forming homopolymers and heteropolymers, respectively. In terms of processing, S-nitrosylated, leading to inactivation of the acyltransferase activity.

The protein localises to the cytoplasm. It localises to the cytosol. Its subcellular location is the nucleus. It is found in the chromosome. The protein resides in the secreted. The protein localises to the extracellular space. It localises to the extracellular matrix. Its subcellular location is the cell membrane. It is found in the mitochondrion. The protein resides in the perinuclear region. The catalysed reaction is L-glutaminyl-[protein] + L-lysyl-[protein] = [protein]-L-lysyl-N(6)-5-L-glutamyl-[protein] + NH4(+). It carries out the reaction L-glutaminyl-[protein] + serotonin = 5-serotonyl-L-glutamyl-[protein] + NH4(+). It catalyses the reaction L-glutaminyl-[protein] + dopamine = 5-dopaminyl-L-glutamyl-[protein] + NH4(+). The enzyme catalyses L-glutaminyl-[protein] + histamine = 5-histaminyl-L-glutamyl-[protein] + NH4(+). The catalysed reaction is L-glutaminyl-[protein] + (R)-noradrenaline = 5-(R)-noradrenalinyl-L-glutamyl-[protein] + NH4(+). It carries out the reaction L-glutaminyl-[protein] + H2O = L-glutamyl-[protein] + NH4(+). Its activity is regulated as follows. Acyltransferase activity is regulated by the binding of GTP and Ca(2+): inactivated by GTP, which stabilizes its closed structure, thereby obstructing the accessibility of substrates to the active sites. In contrast, Ca(2+) acts as a cofactor by inducing conformational change to the active open form. In absence of Ca(2+), Mg(2+) may bind Ca(2+)-binding sites, promoting GTP-binding and subsequent inhibition of the acyltransferase activity. Extracellularly reduced and activated by CLIC3. Specifically inhibited by compound VA4 ((S)-Benzyl (6-Acrylamido-1-(4-((5-(dimethylamino)naphthalen-1-yl)sulfonyl)piperazin-1-yl)-1-oxohexan-2-yl)carbamate), which specifically abolishes both the transamidation and GTP-binding activities. Its function is as follows. Calcium-dependent acyltransferase that catalyzes the formation of covalent bonds between peptide-bound glutamine and various primary amines, such as gamma-amino group of peptide-bound lysine, or mono- and polyamines, thereby producing cross-linked or aminated proteins, respectively. Involved in many biological processes, such as bone development, angiogenesis, wound healing, cellular differentiation, chromatin modification and apoptosis. Acts as a protein-glutamine gamma-glutamyltransferase by mediating the cross-linking of proteins, such as ACO2, HSPB6, FN1, HMGB1, RAP1GDS1, SLC25A4/ANT1, SPP1 and WDR54. Under physiological conditions, the protein cross-linking activity is inhibited by GTP; inhibition is relieved by Ca(2+) in response to various stresses. When secreted, catalyzes cross-linking of proteins of the extracellular matrix, such as FN1 and SPP1 resulting in the formation of scaffolds. Plays a key role during apoptosis, both by (1) promoting the cross-linking of cytoskeletal proteins resulting in condensation of the cytoplasm, and by (2) mediating cross-linking proteins of the extracellular matrix, resulting in the irreversible formation of scaffolds that stabilize the integrity of the dying cells before their clearance by phagocytosis, thereby preventing the leakage of harmful intracellular components. In addition to protein cross-linking, can use different monoamine substrates to catalyze a vast array of protein post-translational modifications: mediates aminylation of serotonin, dopamine, noradrenaline or histamine into glutamine residues of target proteins to generate protein serotonylation, dopaminylation, noradrenalinylation or histaminylation, respectively. Mediates protein serotonylation of small GTPases during activation and aggregation of platelets, leading to constitutive activation of these GTPases. Plays a key role in chromatin organization by mediating serotonylation and dopaminylation of histone H3. Catalyzes serotonylation of 'Gln-5' of histone H3 (H3Q5ser) during serotonergic neuron differentiation, thereby facilitating transcription. Acts as a mediator of neurotransmission-independent role of nuclear dopamine in ventral tegmental area (VTA) neurons: catalyzes dopaminylation of 'Gln-5' of histone H3 (H3Q5dop), thereby regulating relapse-related transcriptional plasticity in the reward system. Regulates vein remodeling by mediating serotonylation and subsequent inactivation of ATP2A2/SERCA2. Also acts as a protein deamidase by mediating the side chain deamidation of specific glutamine residues of proteins to glutamate. Catalyzes specific deamidation of protein gliadin, a component of wheat gluten in the diet. May also act as an isopeptidase cleaving the previously formed cross-links. Also able to participate in signaling pathways independently of its acyltransferase activity: acts as a signal transducer in alpha-1 adrenergic receptor-mediated stimulation of phospholipase C-delta (PLCD) activity and is required for coupling alpha-1 adrenergic agonists to the stimulation of phosphoinositide lipid metabolism. Functionally, has cytotoxic activity: is able to induce apoptosis independently of its acyltransferase activity. This Homo sapiens (Human) protein is Protein-glutamine gamma-glutamyltransferase 2.